Here is a 258-residue protein sequence, read N- to C-terminus: F-box/SPRY domain-containing protein 1 (258 aa).

Residues 6–54 form the F-box domain; it reads TEYAPDIPDNVLELIFSYLKLQDLRNCSLVCKSWNRFLNDENNEVWRAQ. The B30.2/SPRY domain maps to 64 to 256; sequence FKTDLLSVVP…ISMVYLGPPL (193 aa).

The protein belongs to the FBXO45/Fsn family. Component of an E3 ubiquitin ligase complex composed of hiw and Fsn.

It localises to the synapse. Its pathway is protein modification; protein ubiquitination. Its function is as follows. Required in the presynaptic motoneuron to down-regulate the levels of wnd and restrain synaptic terminal growth at the neuromuscular junction (NMJ). The sequence is that of F-box/SPRY domain-containing protein 1 from Aedes aegypti (Yellowfever mosquito).